The primary structure comprises 500 residues: Probable cytosol aminopeptidase (500 aa).

Mn(2+)-binding residues include Lys261 and Asp266. The active site involves Lys273. Positions 284, 343, and 345 each coordinate Mn(2+). Arg347 is an active-site residue.

This sequence belongs to the peptidase M17 family. Mn(2+) serves as cofactor.

It is found in the cytoplasm. The enzyme catalyses Release of an N-terminal amino acid, Xaa-|-Yaa-, in which Xaa is preferably Leu, but may be other amino acids including Pro although not Arg or Lys, and Yaa may be Pro. Amino acid amides and methyl esters are also readily hydrolyzed, but rates on arylamides are exceedingly low.. It carries out the reaction Release of an N-terminal amino acid, preferentially leucine, but not glutamic or aspartic acids.. Its function is as follows. Presumably involved in the processing and regular turnover of intracellular proteins. Catalyzes the removal of unsubstituted N-terminal amino acids from various peptides. This Bacillus subtilis (strain 168) protein is Probable cytosol aminopeptidase (pepA).